The sequence spans 258 residues: Bidirectional sugar transporter SWEET7 (258 aa).

Topologically, residues 1–11 (MVFAHLNLLRK) are extracellular. The chain crosses the membrane as a helical span at residues 12–32 (IVGIIGNFIALCLFLSPTPTF). In terms of domain architecture, MtN3/slv 1 spans 12–100 (IVGIIGNFIA…IFFVYCGRQK (89 aa)). Residues 33–46 (VRIVKKKSVEEYSP) are Cytoplasmic-facing. A helical transmembrane segment spans residues 47–67 (IPYLATLINCLVWVLYGLPTV). The Extracellular segment spans residues 68 to 73 (HPDSTL). The chain crosses the membrane as a helical span at residues 74–94 (VITINGTGILIEIVFLTIFFV). Residues 95-102 (YCGRQKQR) are Cytoplasmic-facing. A helical membrane pass occupies residues 103–123 (LIISAVIAAETAFIAILAVLV). Residues 124–134 (LTLQHTTEKRT) lie on the Extracellular side of the membrane. A helical membrane pass occupies residues 135–155 (MSVGIVCCVFNVMMYASPLSV). Residues 136 to 221 (SVGIVCCVFN…LYGAYYKSTK (86 aa)) form the MtN3/slv 2 domain. Residues 156 to 166 (MKMVIKTKSVE) are Cytoplasmic-facing. The helical transmembrane segment at 167-187 (FMPFWLSVAGFLNAGVWTIYA) threads the bilayer. Residues 188 to 193 (LMPFDP) are Extracellular-facing. The helical transmembrane segment at 194 to 214 (FMAIPNGIGCLFGLAQLILYG) threads the bilayer. The Cytoplasmic segment spans residues 215–258 (AYYKSTKRIMAERENQPGYVGLSSAIARTGSEKTANTNQEPNNV).

The protein belongs to the SWEET sugar transporter family. As to quaternary structure, forms heterooligomers with SWEET8, SWEET11, SWEET13, SWEET16 and SWEET17.

Its subcellular location is the cell membrane. Its function is as follows. Mediates both low-affinity uptake and efflux of sugar across the plasma membrane. This is Bidirectional sugar transporter SWEET7 from Arabidopsis thaliana (Mouse-ear cress).